Here is a 113-residue protein sequence, read N- to C-terminus: Large ribosomal subunit protein bL19 (113 aa).

The protein belongs to the bacterial ribosomal protein bL19 family.

Its function is as follows. This protein is located at the 30S-50S ribosomal subunit interface and may play a role in the structure and function of the aminoacyl-tRNA binding site. This Natranaerobius thermophilus (strain ATCC BAA-1301 / DSM 18059 / JW/NM-WN-LF) protein is Large ribosomal subunit protein bL19.